A 198-amino-acid polypeptide reads, in one-letter code: DnaJ homolog subfamily C member 12 (198 aa).

N-acetylmethionine is present on Met-1. One can recognise a J domain in the interval 14-79 (DYYALLGCDE…ESRARYDHWR (66 aa)). The disordered stretch occupies residues 114 to 177 (EGSGQTFTSS…GLSDLNCGHL (64 aa)). Over residues 116 to 125 (SGQTFTSSVP) the composition is skewed to polar residues. Residues 126 to 156 (NKERSEQRETKKGDPDSNPEKMKQKEPKFPE) are compositionally biased toward basic and acidic residues. Phosphoserine is present on residues Ser-160, Ser-166, and Ser-182.

Interacts with HSPA8. Interacts with TPH1. Interacts with TPH2. As to expression, highest levels of expression are detected in kidney, pineal gland, and raphe nuclei in the brain where it localizes to serotonerigic neurons.

It is found in the cytoplasm. Its function is as follows. Probable co-chaperone that participates in the proper folding of biopterin-dependent aromatic amino acid hydroxylases, which include phenylalanine-4-hydroxylase (PAH), tyrosine 3-monooxygenase (TH) and peripheral and neuronal tryptophan hydroxylases (TPH1 and TPH2). The polypeptide is DnaJ homolog subfamily C member 12 (Dnajc12) (Mus musculus (Mouse)).